Reading from the N-terminus, the 179-residue chain is ATP synthase subunit delta (179 aa).

This sequence belongs to the ATPase delta chain family. F-type ATPases have 2 components, F(1) - the catalytic core - and F(0) - the membrane proton channel. F(1) has five subunits: alpha(3), beta(3), gamma(1), delta(1), epsilon(1). F(0) has three main subunits: a(1), b(2) and c(10-14). The alpha and beta chains form an alternating ring which encloses part of the gamma chain. F(1) is attached to F(0) by a central stalk formed by the gamma and epsilon chains, while a peripheral stalk is formed by the delta and b chains.

It is found in the cell inner membrane. Its function is as follows. F(1)F(0) ATP synthase produces ATP from ADP in the presence of a proton or sodium gradient. F-type ATPases consist of two structural domains, F(1) containing the extramembraneous catalytic core and F(0) containing the membrane proton channel, linked together by a central stalk and a peripheral stalk. During catalysis, ATP synthesis in the catalytic domain of F(1) is coupled via a rotary mechanism of the central stalk subunits to proton translocation. In terms of biological role, this protein is part of the stalk that links CF(0) to CF(1). It either transmits conformational changes from CF(0) to CF(1) or is implicated in proton conduction. This Maricaulis maris (strain MCS10) (Caulobacter maris) protein is ATP synthase subunit delta.